The primary structure comprises 700 residues: Phosphoribosylformylglycinamidine synthase subunit PurL (700 aa).

H34 is an active-site residue. Residue Y37 participates in ATP binding. Residue E79 coordinates Mg(2+). Substrate is bound by residues 80 to 83 (SHNH) and R102. The active-site Proton acceptor is the H81. D103 is a binding site for Mg(2+). A substrate-binding site is contributed by Q227. D255 serves as a coordination point for Mg(2+). 299 to 301 (ESQ) contacts substrate. Residues D476 and G513 each contribute to the ATP site. A Mg(2+)-binding site is contributed by N514. Residue S516 participates in substrate binding.

Belongs to the FGAMS family. As to quaternary structure, monomer. Part of the FGAM synthase complex composed of 1 PurL, 1 PurQ and 2 PurS subunits.

The protein resides in the cytoplasm. The catalysed reaction is N(2)-formyl-N(1)-(5-phospho-beta-D-ribosyl)glycinamide + L-glutamine + ATP + H2O = 2-formamido-N(1)-(5-O-phospho-beta-D-ribosyl)acetamidine + L-glutamate + ADP + phosphate + H(+). The protein operates within purine metabolism; IMP biosynthesis via de novo pathway; 5-amino-1-(5-phospho-D-ribosyl)imidazole from N(2)-formyl-N(1)-(5-phospho-D-ribosyl)glycinamide: step 1/2. In terms of biological role, part of the phosphoribosylformylglycinamidine synthase complex involved in the purines biosynthetic pathway. Catalyzes the ATP-dependent conversion of formylglycinamide ribonucleotide (FGAR) and glutamine to yield formylglycinamidine ribonucleotide (FGAM) and glutamate. The FGAM synthase complex is composed of three subunits. PurQ produces an ammonia molecule by converting glutamine to glutamate. PurL transfers the ammonia molecule to FGAR to form FGAM in an ATP-dependent manner. PurS interacts with PurQ and PurL and is thought to assist in the transfer of the ammonia molecule from PurQ to PurL. The polypeptide is Phosphoribosylformylglycinamidine synthase subunit PurL (Halobacterium salinarum (strain ATCC 29341 / DSM 671 / R1)).